The sequence spans 277 residues: Release factor glutamine methyltransferase (277 aa).

S-adenosyl-L-methionine is bound by residues 117–121 (GTGTG), aspartate 140, tryptophan 168, and asparagine 183. Substrate is bound at residue 183-186 (NPPY).

Belongs to the protein N5-glutamine methyltransferase family. PrmC subfamily.

It catalyses the reaction L-glutaminyl-[peptide chain release factor] + S-adenosyl-L-methionine = N(5)-methyl-L-glutaminyl-[peptide chain release factor] + S-adenosyl-L-homocysteine + H(+). Its function is as follows. Methylates the class 1 translation termination release factors RF1/PrfA and RF2/PrfB on the glutamine residue of the universally conserved GGQ motif. This Shigella flexneri protein is Release factor glutamine methyltransferase.